Reading from the N-terminus, the 137-residue chain is MKRNIIYYTLRLLPHGIMLVHSLNQFIDEFFTVTERTTLDEMLELSWDTPTTRWVGQLEWPQKVVSLLEVWTNSDDFVNQIVNGQDTILTQVGFDDSIVGQWNSLLVDLTETSLVDQLSNSRVGWVTVSNVWFNQLQ.

This is an uncharacterized protein from Saccharomyces cerevisiae (strain ATCC 204508 / S288c) (Baker's yeast).